The primary structure comprises 280 residues: Phosphatidylglycerol--prolipoprotein diacylglyceryl transferase (280 aa).

Helical transmembrane passes span 15-35 (IFSIPIRWYGLMYFLAFIFAL), 60-80 (FIGLFIGGRIGYIIFYNPVFF), and 90-110 (IWEGGMSFHGGLLGVIIVLLF). Position 138 (R138) interacts with a 1,2-diacyl-sn-glycero-3-phospho-(1'-sn-glycerol). The next 2 membrane-spanning stretches (helical) occupy residues 217 to 237 (MPFGFVSSIFLILYGCFRIFL) and 257 to 277 (GQLLSMPMIVLGILIAINIYV).

Belongs to the Lgt family.

Its subcellular location is the cell membrane. The catalysed reaction is L-cysteinyl-[prolipoprotein] + a 1,2-diacyl-sn-glycero-3-phospho-(1'-sn-glycerol) = an S-1,2-diacyl-sn-glyceryl-L-cysteinyl-[prolipoprotein] + sn-glycerol 1-phosphate + H(+). It participates in protein modification; lipoprotein biosynthesis (diacylglyceryl transfer). Its function is as follows. Catalyzes the transfer of the diacylglyceryl group from phosphatidylglycerol to the sulfhydryl group of the N-terminal cysteine of a prolipoprotein, the first step in the formation of mature lipoproteins. The sequence is that of Phosphatidylglycerol--prolipoprotein diacylglyceryl transferase from Buchnera aphidicola subsp. Baizongia pistaciae (strain Bp).